We begin with the raw amino-acid sequence, 824 residues long: 4-methylaminobutanoate oxidase (formaldehyde-forming) (824 aa).

His67 bears the Pros-8alpha-FAD histidine mark.

The protein belongs to the GcvT family. FAD is required as a cofactor.

The catalysed reaction is 4-(methylamino)butanoate + O2 + H2O = 4-aminobutanoate + formaldehyde + H2O2. It participates in alkaloid degradation; nicotine degradation. Its function is as follows. Catalyzes the oxidative demethylation of 4-methylaminobutanoate produced from the pyrrolidine ring of nicotine. To a much lesser extent, can also use sarcosine as substrate, but is not active against dimethylglycine, methylaminopropionitrile, methylaminopropylamine, and alpha-methylaminobutanoate. This Paenarthrobacter nicotinovorans (Arthrobacter nicotinovorans) protein is 4-methylaminobutanoate oxidase (formaldehyde-forming) (abo).